Here is a 362-residue protein sequence, read N- to C-terminus: UDP-N-acetylglucosamine--N-acetylmuramyl-(pentapeptide) pyrophosphoryl-undecaprenol N-acetylglucosamine transferase (362 aa).

Residues 15 to 17 (TGG), N127, R165, S191, I247, 266 to 271 (ALTVSE), and Q292 each bind UDP-N-acetyl-alpha-D-glucosamine.

It belongs to the glycosyltransferase 28 family. MurG subfamily.

It is found in the cell inner membrane. It carries out the reaction di-trans,octa-cis-undecaprenyl diphospho-N-acetyl-alpha-D-muramoyl-L-alanyl-D-glutamyl-meso-2,6-diaminopimeloyl-D-alanyl-D-alanine + UDP-N-acetyl-alpha-D-glucosamine = di-trans,octa-cis-undecaprenyl diphospho-[N-acetyl-alpha-D-glucosaminyl-(1-&gt;4)]-N-acetyl-alpha-D-muramoyl-L-alanyl-D-glutamyl-meso-2,6-diaminopimeloyl-D-alanyl-D-alanine + UDP + H(+). It functions in the pathway cell wall biogenesis; peptidoglycan biosynthesis. Its function is as follows. Cell wall formation. Catalyzes the transfer of a GlcNAc subunit on undecaprenyl-pyrophosphoryl-MurNAc-pentapeptide (lipid intermediate I) to form undecaprenyl-pyrophosphoryl-MurNAc-(pentapeptide)GlcNAc (lipid intermediate II). The polypeptide is UDP-N-acetylglucosamine--N-acetylmuramyl-(pentapeptide) pyrophosphoryl-undecaprenol N-acetylglucosamine transferase (Shewanella oneidensis (strain ATCC 700550 / JCM 31522 / CIP 106686 / LMG 19005 / NCIMB 14063 / MR-1)).